The sequence spans 394 residues: 1-deoxy-D-xylulose 5-phosphate reductoisomerase (394 aa).

Residues threonine 10, glycine 11, serine 12, isoleucine 13, glycine 38, arginine 39, asparagine 40, and asparagine 123 each coordinate NADPH. Lysine 124 is a 1-deoxy-D-xylulose 5-phosphate binding site. Residue glutamate 125 coordinates NADPH. Aspartate 149 serves as a coordination point for Mn(2+). 4 residues coordinate 1-deoxy-D-xylulose 5-phosphate: serine 150, glutamate 151, serine 175, and histidine 198. Glutamate 151 provides a ligand contact to Mn(2+). Glycine 204 lines the NADPH pocket. Serine 211, asparagine 216, lysine 217, and glutamate 220 together coordinate 1-deoxy-D-xylulose 5-phosphate. Mn(2+) is bound at residue glutamate 220.

The protein belongs to the DXR family. Requires Mg(2+) as cofactor. Mn(2+) is required as a cofactor.

It carries out the reaction 2-C-methyl-D-erythritol 4-phosphate + NADP(+) = 1-deoxy-D-xylulose 5-phosphate + NADPH + H(+). It participates in isoprenoid biosynthesis; isopentenyl diphosphate biosynthesis via DXP pathway; isopentenyl diphosphate from 1-deoxy-D-xylulose 5-phosphate: step 1/6. Its function is as follows. Catalyzes the NADPH-dependent rearrangement and reduction of 1-deoxy-D-xylulose-5-phosphate (DXP) to 2-C-methyl-D-erythritol 4-phosphate (MEP). This is 1-deoxy-D-xylulose 5-phosphate reductoisomerase from Cereibacter sphaeroides (strain KD131 / KCTC 12085) (Rhodobacter sphaeroides).